Consider the following 422-residue polypeptide: La-related protein 6A (422 aa).

Residues 1 to 94 form a disordered region; that stretch reads MSSLPLRSGE…DHGENPVETD (94 aa). The segment covering 48–61 has biased composition (low complexity); it reads VTESSDDVVVNVSE. A compositionally biased stretch (basic and acidic residues) spans 73–89; that stretch reads DHERNSGEDRDQDHGEN. In terms of domain architecture, HTH La-type RNA-binding spans 97-188; it reads VVPIDELNQK…KRLSPLPEIR (92 aa). Residues 193-283 enclose the RRM domain; it reads FTVLVENLPE…NGLRVKLLEQ (91 aa). The segment at 286-422 is disordered; it reads GKFAQRRPAR…PTSTQTSHEV (137 aa). A compositionally biased stretch (basic and acidic residues) spans 295–348; it reads RREVDKEKDTTGRVHDQTGGEKNKKTREHQNHRLHHSDNPADDDGGNHQKDKNG.

It localises to the nucleus. In terms of biological role, transcriptional regulator. The protein is La-related protein 6A (LARP6A) of Arabidopsis thaliana (Mouse-ear cress).